Consider the following 156-residue polypeptide: Transcription elongation factor GreA (156 aa).

The stretch at 1 to 32 forms a coiled coil; the sequence is MKKVRLTREGYEKLKQELEELKRKFMYEISER.

It belongs to the GreA/GreB family.

Functionally, necessary for efficient RNA polymerase transcription elongation past template-encoded arresting sites. The arresting sites in DNA have the property of trapping a certain fraction of elongating RNA polymerases that pass through, resulting in locked ternary complexes. Cleavage of the nascent transcript by cleavage factors such as GreA or GreB allows the resumption of elongation from the new 3'terminus. GreA releases sequences of 2 to 3 nucleotides. In Thermotoga neapolitana (strain ATCC 49049 / DSM 4359 / NBRC 107923 / NS-E), this protein is Transcription elongation factor GreA.